Here is a 60-residue protein sequence, read N- to C-terminus: MKNVLILGAGGQIARHVINQLADKQTIKQTLFARQPAKIHKPYPTNKMQTTSGKKVIQDR.

Residues 40–60 (HKPYPTNKMQTTSGKKVIQDR) form a disordered region.

The chain is Protein YmjC (ymjC) from Escherichia coli (strain K12).